We begin with the raw amino-acid sequence, 111 residues long: Protein BEX5 (111 aa).

Basic and acidic residues predominate over residues 1-12 (MENVPKENKVVE). The segment at 1 to 37 (MENVPKENKVVEKAPVQNEAPALGGGEYQEPGGNVKG) is disordered. The interval 100–104 (HHDHH) is his cluster. C108 lines the Zn(2+) pocket.

The protein belongs to the BEX family. Ubiquitinated. Degraded by the proteasome.

It localises to the cytoplasm. The protein is Protein BEX5 (BEX5) of Homo sapiens (Human).